Here is a 351-residue protein sequence, read N- to C-terminus: MYGWEMLSFNIHDGFLEAIVRGNRSGLLTAADYNNLCQCENLDDVKMHLTATEYGPYLQNEPSPLHTTTIVEKCTLKLVDEYKHMMCQATEPLSTFLQYITYGHMIDNVVLIVTGTLHERDVNELLEKCHPLGMFDSIASLAVAQNMRELYRLVLVDTPLAPYFSECITSEDLDDMNIEIMRNTLYKAYLEDFYKFCEKLGGATAEIMCDLLSFEADRRAVNITINSIGTELTRDDRRKLYSNFGLLYPYGHEELAVCEDVDQVRGVMEKYPPYQAIFAKISYGESQMLDKAFYEEEVRRLCLSFEQQFHYAVFFAYIRLREQEIRNLMWISECVAQNQKNRVHDSVVFIF.

The protein belongs to the V-ATPase V0D/AC39 subunit family. V-ATPase is a heteromultimeric enzyme composed of a peripheral catalytic V1 complex (components A to H) attached to an integral membrane V0 proton pore complex (components: a, c, c', c'' and d).

Its function is as follows. Subunit of the integral membrane V0 complex of vacuolar ATPase. Vacuolar ATPase is responsible for acidifying a variety of intracellular compartments in eukaryotic cells, thus providing most of the energy required for transport processes in the vacuolar system. The polypeptide is Probable V-type proton ATPase subunit d (Oryza sativa subsp. japonica (Rice)).